Here is a 431-residue protein sequence, read N- to C-terminus: 3-phosphoshikimate 1-carboxyvinyltransferase (431 aa).

Lys-26, Ser-27, and Arg-31 together coordinate 3-phosphoshikimate. Residue Lys-26 participates in phosphoenolpyruvate binding. Gly-99 and Arg-127 together coordinate phosphoenolpyruvate. 6 residues coordinate 3-phosphoshikimate: Ser-170, Ser-171, Gln-172, Ser-199, Glu-314, and His-343. A phosphoenolpyruvate-binding site is contributed by Gln-172. Glu-314 functions as the Proton acceptor in the catalytic mechanism. Positions 347, 388, and 413 each coordinate phosphoenolpyruvate.

The protein belongs to the EPSP synthase family. As to quaternary structure, monomer.

It localises to the cytoplasm. The enzyme catalyses 3-phosphoshikimate + phosphoenolpyruvate = 5-O-(1-carboxyvinyl)-3-phosphoshikimate + phosphate. It functions in the pathway metabolic intermediate biosynthesis; chorismate biosynthesis; chorismate from D-erythrose 4-phosphate and phosphoenolpyruvate: step 6/7. Catalyzes the transfer of the enolpyruvyl moiety of phosphoenolpyruvate (PEP) to the 5-hydroxyl of shikimate-3-phosphate (S3P) to produce enolpyruvyl shikimate-3-phosphate and inorganic phosphate. This chain is 3-phosphoshikimate 1-carboxyvinyltransferase, found in Mycobacterium marinum (strain ATCC BAA-535 / M).